Reading from the N-terminus, the 588-residue chain is Phenol 2-monooxygenase fsqG (588 aa).

FAD contacts are provided by residues 9 to 38 (DVLI…LIDW), 17 to 18 (PA), 37 to 39 (DWK), 45 to 50 (TGRADG), Y232, 289 to 299 (ARHNRIFLAGD), D299, and 309 to 313 (GQGMN). The substrate site is built by D49 and Y232.

Belongs to the PheA/TfdB FAD monooxygenase family. In terms of assembly, homodimer. FAD is required as a cofactor.

It functions in the pathway secondary metabolite biosynthesis. Phenol 2-monooxygenase; part of the gene cluster that mediates the biosynthesis of the isoquinoline alkaloids fumisoquin A, fumisoquin B and fumisoquin C; as well as small amounts of fumipyrrole as a shunt metabolite. The products of the cluster lead to a brown coloration and are important for growth and conidiation. The nonribosomal peptide synthetase-like protein fsqF, which lacks a canonical condensation domain, is required for addition of a serine-derived dehydroalanine moiety to activated tyrosine but is not essential for the subsequent steps leading to isoquinoline formation. A different enzyme, most likely the ATP-grasp enzyme fsqD, is responsible for activation of tyrosine. Three additional enzymes encoded by the fsq cluster, the N-methyltransferase fsqC, the phenol 2-monooxygenase fsqG and the FAD-dependent oxidase fsqB, catalyze the formation of the isoquinoline ring system in the fumisoquins. FsqB converts the fspF thiolation domain-bound (2S,4S,5S)-2-amino-6-(3,4-dihydroxyphenyl)-4-hydroxy-5-(methylamino)hexanoyl into isoquinoline. The cyclization most likely proceeds via a two-step mechanism, beginning with FAD-dependent oxidation of the methyl group to an iminium species followed by electrophilic attack on the deprotonated phenol. The protein is Phenol 2-monooxygenase fsqG of Aspergillus fumigatus (strain ATCC MYA-4609 / CBS 101355 / FGSC A1100 / Af293) (Neosartorya fumigata).